The following is a 275-amino-acid chain: Beta-lactamase OXA-2 (275 aa).

A signal peptide spans 1 to 21; it reads MAIRIFAILFSIFSLATFAHA. The Acyl-ester intermediate role is filled by Ser72. An N6-carboxylysine modification is found at Lys75. 210-212 contacts substrate; that stretch reads KTG.

Belongs to the class-D beta-lactamase family.

The enzyme catalyses a beta-lactam + H2O = a substituted beta-amino acid. Functionally, this is an oxacillin-hydrolyzing beta-lactamase. This is Beta-lactamase OXA-2 (bla) from Escherichia coli.